A 379-amino-acid chain; its full sequence is Sulfate adenylyltransferase (379 aa).

It belongs to the sulfate adenylyltransferase family.

It carries out the reaction sulfate + ATP + H(+) = adenosine 5'-phosphosulfate + diphosphate. Its pathway is sulfur metabolism; hydrogen sulfide biosynthesis; sulfite from sulfate: step 1/3. This chain is Sulfate adenylyltransferase, found in Cenarchaeum symbiosum (strain A).